Here is a 589-residue protein sequence, read N- to C-terminus: uncharacterized protein (589 aa).

The next 5 helical transmembrane spans lie at 11-31 (LNWI…TMLA), 57-77 (LILM…FSVL), 97-117 (FWFF…HAIA), 190-210 (IEFT…GFNI), and 213-233 (GVVF…VWIG). One can recognise an ABC transmembrane type-1 domain in the interval 57 to 357 (LILMLLVLFI…FRLFYEQFTL (301 aa)). One can recognise an ABC transporter domain in the interval 390–587 (VALKNFGIKD…QLKLDVCLLC (198 aa)). 423–430 (GASGTGKT) contacts ATP.

Belongs to the ABC transporter superfamily.

The protein resides in the cell inner membrane. This is an uncharacterized protein from Haemophilus influenzae (strain ATCC 51907 / DSM 11121 / KW20 / Rd).